Here is a 448-residue protein sequence, read N- to C-terminus: Chromosomal replication initiator protein DnaA 1 (448 aa).

The interval 1–76 is domain I, interacts with DnaA modulators; that stretch reads MLTSETQNVW…FLPVDMSGEP (76 aa). Positions 76–111 are domain II; the sequence is PAIRFIIAPPQKKIIPPNHFSISSSQKEEQSPNSDV. Positions 112-328 are domain III, AAA+ region; the sequence is KLNNNYRFEN…GAINRLSAHC (217 aa). ATP contacts are provided by Gly-156, Gly-158, Lys-159, and Thr-160. The segment at 329-448 is domain IV, binds dsDNA; sequence RLLDLNITEE…IGMVRRNIES (120 aa).

It belongs to the DnaA family. Oligomerizes as a right-handed, spiral filament on DNA at oriC.

The protein resides in the cytoplasm. In terms of biological role, plays an essential role in the initiation and regulation of chromosomal replication. ATP-DnaA binds to the origin of replication (oriC) to initiate formation of the DNA replication initiation complex once per cell cycle. Binds the DnaA box (a 9 base pair repeat at the origin) and separates the double-stranded (ds)DNA. Forms a right-handed helical filament on oriC DNA; dsDNA binds to the exterior of the filament while single-stranded (ss)DNA is stabiized in the filament's interior. The ATP-DnaA-oriC complex binds and stabilizes one strand of the AT-rich DNA unwinding element (DUE), permitting loading of DNA polymerase. After initiation quickly degrades to an ADP-DnaA complex that is not apt for DNA replication. Binds acidic phospholipids. The polypeptide is Chromosomal replication initiator protein DnaA 1 (Protochlamydia amoebophila (strain UWE25)).